Here is a 542-residue protein sequence, read N- to C-terminus: MTRYVFITGGVVSSLGKGLASAALAAVLQARGYRVRMRKLDPYLNVDPGTMSPTQHGEVFVTDDGAETDLDLGHYERFTGVPASRADNITTGRIYQDIIAKERRGDYLGATIQVIPHVTNAIKDFVLDGNDSFDFVLVEIGGTVGDIEGLPFFEAIRQLGQELPRGTCCYVHLTLLPYIPSAGELKTKPTQHSVKELRSIGIQPDILLCRCDRPIPMDERRKLALFCNVRQTAVIEALDVASIYEVPLSYRTAGLDREVLGHFGLEHGEEPDLGRWQTIAERVRNPEGEVSIAIVGKYTGLKDAYKSLTEALTHGGISHRVKVNLEWIEAEVFEREDPAPFLEGLNGILVPGGFGQRGAEGKIRAARYAREKRIPYLGICFGMQMAVIEAARSLAGMPEANSTEFGETAEPVVGLLTEWLRGNELERRAAAGDLGGTMRLGAYEAKLDPESKIAQIYGSEQISERHRHRYEVNMAYRERLEAKGLRFSGVSPDGLLPETVEHVGHPWFIGVQFHPELKSRPFEPHPLFKGFVGAAIEQSRLV.

The amidoligase domain stretch occupies residues 1–265 (MTRYVFITGG…DREVLGHFGL (265 aa)). Residue serine 13 participates in CTP binding. Serine 13 is a UTP binding site. Residues 14–19 (SLGKGL) and aspartate 71 contribute to the ATP site. 2 residues coordinate Mg(2+): aspartate 71 and glutamate 139. CTP-binding positions include 146–148 (DIE), 186–191 (KTKPTQ), and lysine 222. Residues 186 to 191 (KTKPTQ) and lysine 222 each bind UTP. The region spanning 291–541 (SIAIVGKYTG…VGAAIEQSRL (251 aa)) is the Glutamine amidotransferase type-1 domain. Glycine 353 is an L-glutamine binding site. Cysteine 380 acts as the Nucleophile; for glutamine hydrolysis in catalysis. L-glutamine contacts are provided by residues 381–384 (FGMQ), glutamate 404, and arginine 469. Catalysis depends on residues histidine 514 and glutamate 516.

This sequence belongs to the CTP synthase family. Homotetramer.

The enzyme catalyses UTP + L-glutamine + ATP + H2O = CTP + L-glutamate + ADP + phosphate + 2 H(+). The catalysed reaction is L-glutamine + H2O = L-glutamate + NH4(+). It catalyses the reaction UTP + NH4(+) + ATP = CTP + ADP + phosphate + 2 H(+). It functions in the pathway pyrimidine metabolism; CTP biosynthesis via de novo pathway; CTP from UDP: step 2/2. With respect to regulation, allosterically activated by GTP, when glutamine is the substrate; GTP has no effect on the reaction when ammonia is the substrate. The allosteric effector GTP functions by stabilizing the protein conformation that binds the tetrahedral intermediate(s) formed during glutamine hydrolysis. Inhibited by the product CTP, via allosteric rather than competitive inhibition. Catalyzes the ATP-dependent amination of UTP to CTP with either L-glutamine or ammonia as the source of nitrogen. Regulates intracellular CTP levels through interactions with the four ribonucleotide triphosphates. The sequence is that of CTP synthase from Methylobacterium radiotolerans (strain ATCC 27329 / DSM 1819 / JCM 2831 / NBRC 15690 / NCIMB 10815 / 0-1).